The primary structure comprises 267 residues: Putative carbamate hydrolase RutD (267 aa).

One can recognise an AB hydrolase-1 domain in the interval 14–115 (PVMVMISGLG…SALVIINGWL (102 aa)).

The protein belongs to the AB hydrolase superfamily. Hydrolase RutD family.

The catalysed reaction is carbamate + 2 H(+) = NH4(+) + CO2. Functionally, involved in pyrimidine catabolism. May facilitate the hydrolysis of carbamate, a reaction that can also occur spontaneously. This Cronobacter turicensis (strain DSM 18703 / CCUG 55852 / LMG 23827 / z3032) protein is Putative carbamate hydrolase RutD.